The following is a 502-amino-acid chain: Cytochrome c-552 (502 aa).

The N-terminal stretch at 1–25 (MKYLTKSRVIATIAMLGCLSVSAWA) is a signal peptide. Histidine 105 is a heme c binding site. 3 residues coordinate heme: cysteine 133, cysteine 136, and lysine 137. 6 residues coordinate heme c: cysteine 171, cysteine 174, histidine 175, cysteine 220, cysteine 223, and histidine 224. Residues glutamate 226, tyrosine 227, lysine 271, and glutamine 273 each coordinate Ca(2+). Tyrosine 227 lines the substrate pocket. Histidine 274 contributes to the substrate binding site. Positions 285, 292, 295, 296, 311, 324, 327, 328, and 403 each coordinate heme c. A disordered region spans residues 481-502 (RERGLLPEVTPKSVTTPKVDAK).

The protein belongs to the cytochrome c-552 family. It depends on Ca(2+) as a cofactor. Requires heme c as cofactor.

The protein resides in the periplasm. The enzyme catalyses 6 Fe(III)-[cytochrome c] + NH4(+) + 2 H2O = 6 Fe(II)-[cytochrome c] + nitrite + 8 H(+). It functions in the pathway nitrogen metabolism; nitrate reduction (assimilation). Its function is as follows. Catalyzes the reduction of nitrite to ammonia, consuming six electrons in the process. The chain is Cytochrome c-552 from Haemophilus ducreyi (strain 35000HP / ATCC 700724).